The sequence spans 585 residues: Packaging protein UL32 (585 aa).

A disordered region spans residues 1-25 (MDRVESEEPMDGFESPVFSENTSSN). Residues C107, C110, H187, C193, C408, C411, H484, and C491 each coordinate Zn(2+). Zinc finger stretches follow at residues 107-193 (CLVC…LHVC) and 408-491 (CMLC…DLLC).

Belongs to the herpesviridae UL32 protein family.

Its subcellular location is the host cytoplasm. It localises to the host nucleus. Plays a role in efficient localization of neo-synthesized capsids to nuclear replication compartments, thereby controlling cleavage and packaging of virus genomic DNA. The chain is Packaging protein UL32 (26) from Varicella-zoster virus (strain Dumas) (HHV-3).